A 1461-amino-acid chain; its full sequence is A disintegrin and metalloproteinase with thrombospondin motifs adt-1 (1461 aa).

Residues 1 to 21 (MPPFYIVITFLLSTVFRISQS) form the signal peptide. The propeptide occupies 22-163 (VHHHLNEEEL…HLQKERHLVY (142 aa)). N-linked (GlcNAc...) asparagine glycosylation is present at Asn69. Residues 190–197 (SFCDTSEQ) carry the Cysteine switch motif. Asn212 carries an N-linked (GlcNAc...) asparagine glycan. The region spanning 233 to 435 (ITLEIGLFLD…CSVREFNAFL (203 aa)) is the Peptidase M12B domain. Residue His388 participates in Zn(2+) binding. The active site involves Glu389. 2 residues coordinate Zn(2+): His392 and His398. Residues Cys405 and Cys410 are joined by a disulfide bond. In terms of domain architecture, Disintegrin spans 464-546 (RLPGQRFTAD…TFGLTPVPID (83 aa)). 13 consecutive TSP type-1 domains span residues 708 to 759 (HQWE…RDCE), 761 to 802 (FGEW…RPCD), 804 to 852 (EGCW…QKCI), 853 to 898 (SQSW…QQCP), 903 to 952 (LSVW…GPCE), 955 to 1000 (YLTW…IACL), 1035 to 1083 (SIHS…NSCL), 1087 to 1133 (IWSD…PSCS), 1148 to 1200 (APRW…GSCS), 1203 to 1260 (AGGW…NVCS), 1265 to 1321 (DGGW…ARCH), 1324 to 1378 (DGGW…PACD), and 1382 to 1435 (DGEW…RQSP). Disulfide bonds link Cys719/Cys751, Cys723/Cys758, and Cys735/Cys741. 6 disulfide bridges follow: Cys816-Cys846, Cys820-Cys851, Cys831-Cys836, Cys862-Cys892, Cys866-Cys897, and Cys877-Cys882. 3 disulfides stabilise this stretch: Cys1047–Cys1077, Cys1051–Cys1082, and Cys1062–Cys1067. Intrachain disulfides connect Cys1160–Cys1194, Cys1162–Cys1199, Cys1173–Cys1184, Cys1215–Cys1253, Cys1219–Cys1259, Cys1231–Cys1243, Cys1277–Cys1314, Cys1281–Cys1320, Cys1292–Cys1304, Cys1336–Cys1372, Cys1340–Cys1377, and Cys1351–Cys1362.

Zn(2+) is required as a cofactor. In terms of tissue distribution, in hermaphrodites, expressed in the vulva, head ganglia, ventral nerve cord and amphid neurons. Expressed in the rays of the male tail.

It localises to the secreted. Plays a role in ray morphogenesis in the male tail, probably by remodeling the extracellular matrix (ECM) in the cuticle. In Caenorhabditis elegans, this protein is A disintegrin and metalloproteinase with thrombospondin motifs adt-1.